Here is a 553-residue protein sequence, read N- to C-terminus: Pseudouridylate synthase RPUSD2 (553 aa).

The interval 76-135 (AVGKQVPESGDQAQGGEGQLPSNGEQTPAPVADSGKRKKRRGATGERVVPPPKKRRTGVS) is disordered. The active site involves Asp-287. Thr-490 is subject to Phosphothreonine.

It belongs to the pseudouridine synthase RluA family.

It catalyses the reaction a uridine in mRNA = a pseudouridine in mRNA. Its function is as follows. Pseudouridine synthase that catalyzes pseudouridylation of mRNAs. In Mus musculus (Mouse), this protein is Pseudouridylate synthase RPUSD2.